The sequence spans 363 residues: 3-dehydroquinate synthase (363 aa).

NAD(+) contacts are provided by residues 134 to 135 (TT), Lys-147, Lys-156, and 174 to 177 (TLIT). Glu-189, His-254, and His-271 together coordinate Zn(2+).

Belongs to the sugar phosphate cyclases superfamily. Dehydroquinate synthase family. The cofactor is NAD(+). Co(2+) is required as a cofactor. Zn(2+) serves as cofactor.

It localises to the cytoplasm. It carries out the reaction 7-phospho-2-dehydro-3-deoxy-D-arabino-heptonate = 3-dehydroquinate + phosphate. The protein operates within metabolic intermediate biosynthesis; chorismate biosynthesis; chorismate from D-erythrose 4-phosphate and phosphoenolpyruvate: step 2/7. Catalyzes the conversion of 3-deoxy-D-arabino-heptulosonate 7-phosphate (DAHP) to dehydroquinate (DHQ). This Prochlorococcus marinus subsp. pastoris (strain CCMP1986 / NIES-2087 / MED4) protein is 3-dehydroquinate synthase.